We begin with the raw amino-acid sequence, 234 residues long: Rhodanese-like domain-containing protein 9, chloroplastic (234 aa).

Residues Met1–Ala47 constitute a chloroplast transit peptide. The region spanning Ala62–Gly185 is the Rhodanese domain. Cys145 serves as the catalytic Cysteine persulfide intermediate. The chain crosses the membrane as a helical span at residues Ile204–Phe222.

The protein resides in the plastid. The protein localises to the chloroplast. It localises to the membrane. The polypeptide is Rhodanese-like domain-containing protein 9, chloroplastic (STR9) (Arabidopsis thaliana (Mouse-ear cress)).